Reading from the N-terminus, the 87-residue chain is Alpha-elapitoxin-Ls2a (87 aa).

A signal peptide spans 1–21; it reads MKTLLLTLVVVTIVCLDLGYT. 5 disulfide bridges follow: C24-C41, C34-C62, C47-C51, C66-C77, and C78-C83.

The protein belongs to the three-finger toxin family. Long-chain subfamily. Type II alpha-neurotoxin sub-subfamily. As to expression, expressed by the venom gland.

It localises to the secreted. Functionally, binds with high affinity to muscular (tested on Torpedo marmorata, Kd=1.6 nM) and neuronal (chimeric alpha-7/CHRNA7, Kd=3 nM) nicotinic acetylcholine receptor (nAChR) and inhibits acetylcholine from binding to the receptor, thereby impairing neuromuscular and neuronal transmission. Also shows a very weak inhibition on GABA(A) receptors. The toxin (10 uM) inhibits 83% of current in channels composed of alpha-1-beta-3-gamma-2 (GABRA1-GABRB3-GABRG2) subunits, 39% of current in channels composed of alpha-2-beta-2-gamma-2 (GABRA2-GABRB2-GABRG2) subunits, and 33% of current in channels composed of alpha-5-beta-2-gamma-2 (GABRA5-GABRB2-GABRG2) subunits. This chain is Alpha-elapitoxin-Ls2a, found in Laticauda semifasciata (Black-banded sea krait).